Here is a 330-residue protein sequence, read N- to C-terminus: Glycerol-3-phosphate dehydrogenase [NAD(P)+] (330 aa).

W13, R33, and K103 together coordinate NADPH. Sn-glycerol 3-phosphate is bound by residues K103, G131, and T133. Residue A135 participates in NADPH binding. Sn-glycerol 3-phosphate contacts are provided by K186, D239, S249, R250, and N251. Catalysis depends on K186, which acts as the Proton acceptor. An NADPH-binding site is contributed by R250. 2 residues coordinate NADPH: V274 and E276.

It belongs to the NAD-dependent glycerol-3-phosphate dehydrogenase family.

The protein localises to the cytoplasm. The enzyme catalyses sn-glycerol 3-phosphate + NAD(+) = dihydroxyacetone phosphate + NADH + H(+). It carries out the reaction sn-glycerol 3-phosphate + NADP(+) = dihydroxyacetone phosphate + NADPH + H(+). The protein operates within membrane lipid metabolism; glycerophospholipid metabolism. Functionally, catalyzes the reduction of the glycolytic intermediate dihydroxyacetone phosphate (DHAP) to sn-glycerol 3-phosphate (G3P), the key precursor for phospholipid synthesis. The protein is Glycerol-3-phosphate dehydrogenase [NAD(P)+] of Erythrobacter litoralis (strain HTCC2594).